A 148-amino-acid polypeptide reads, in one-letter code: UPF0756 membrane protein YeaL (148 aa).

4 consecutive transmembrane segments (helical) span residues 14-34 (ALGFISHNTTVAVSILVLIIV), 51-71 (LTVGIIILTIGVMAPIASGTL), 86-106 (LVAIAVGVFVSWLGGRGVALM), and 121-141 (VLGVALFRGVPVGPLIAAGLV).

The protein belongs to the UPF0756 family.

The protein localises to the cell membrane. This is UPF0756 membrane protein YeaL from Salmonella arizonae (strain ATCC BAA-731 / CDC346-86 / RSK2980).